A 178-amino-acid polypeptide reads, in one-letter code: CDP-archaeol synthase (178 aa).

The next 5 membrane-spanning stretches (helical) occupy residues 3–23 (IIYLVINSFIFILPAYVANAT), 55–75 (TFFGLFCGTITAILEGIIFNL), 91–111 (GIVGLLLSAGALFGDAIGSFI), 125–145 (ILDQLGFIVFALLFVYPFAPV), and 149–169 (MGIFLLVITPMIHLSANIIAY).

It belongs to the CDP-archaeol synthase family. Mg(2+) serves as cofactor.

The protein localises to the cell membrane. It catalyses the reaction 2,3-bis-O-(geranylgeranyl)-sn-glycerol 1-phosphate + CTP + H(+) = CDP-2,3-bis-O-(geranylgeranyl)-sn-glycerol + diphosphate. It functions in the pathway membrane lipid metabolism; glycerophospholipid metabolism. Functionally, catalyzes the formation of CDP-2,3-bis-(O-geranylgeranyl)-sn-glycerol (CDP-archaeol) from 2,3-bis-(O-geranylgeranyl)-sn-glycerol 1-phosphate (DGGGP) and CTP. This reaction is the third ether-bond-formation step in the biosynthesis of archaeal membrane lipids. The protein is CDP-archaeol synthase of Methanococcus aeolicus (strain ATCC BAA-1280 / DSM 17508 / OCM 812 / Nankai-3).